A 269-amino-acid polypeptide reads, in one-letter code: Hydroxypyruvate/pyruvate aldolase (269 aa).

Histidine 47 acts as the Proton acceptor in catalysis. The a divalent metal cation site is built by glutamate 151 and aspartate 177.

This sequence belongs to the HpcH/HpaI aldolase family. Requires a divalent metal cation as cofactor.

The enzyme catalyses D-glyceraldehyde + 3-hydroxypyruvate = 2-dehydro-D-gluconate. The catalysed reaction is D-glyceraldehyde + 3-hydroxypyruvate = (3R,4S,5R)-3,4,5,6-tetrahydroxy-2-oxohexanoate. It carries out the reaction D-glyceraldehyde + 3-hydroxypyruvate = 2-dehydro-D-galactonate. It catalyses the reaction D-glyceraldehyde + pyruvate = 2-dehydro-3-deoxy-L-galactonate. The enzyme catalyses 2-dehydro-3-deoxy-D-gluconate = D-glyceraldehyde + pyruvate. Its function is as follows. Aldolase which can catalyze in vitro the aldolisation reaction between hydroxypyruvate (HPA) or pyruvate (PA) and D-glyceraldehyde (D-GA). The condensation of hydroxypyruvate and D-glyceraldehyde produces 2-dehydro-D-gluconate as the major product, (3R,4S,5R)-3,4,5,6-tetrahydroxy-2-oxohexanoate and 2-dehydro-D-galactonate. The condensation of pyruvate and D-glyceraldehyde produces 2-dehydro-3-deoxy-L-galactonate as the major product and 2-dehydro-3-deoxy-D-gluconate. The chain is Hydroxypyruvate/pyruvate aldolase from Cupriavidus necator (strain ATCC 17699 / DSM 428 / KCTC 22496 / NCIMB 10442 / H16 / Stanier 337) (Ralstonia eutropha).